Consider the following 348-residue polypeptide: Calcium/calmodulin-dependent protein kinase type 1 (348 aa).

The short motif at 7–22 (RDGSGPAPNATIREKY) is the Nuclear localization signal 1 element. The region spanning 22-278 (YDFRDVLGTG…CQDALSHPWI (257 aa)) is the Protein kinase domain. ATP-binding positions include 28-36 (LGTGAFSKV) and Lys52. Residues 71-78 (KVLRKLRH) carry the Nuclear localization signal 2 motif. Asp144 (proton acceptor) is an active-site residue. Thr179 is modified (phosphothreonine; by ckk-1). The interval 278–318 (ISGNTAYTHDIHGTVAVHLKKSLAKRNWKKAYNAAAAIRQL) is autoinhibitory domain. Residues 288–294 (IHGTVAV) carry the Nuclear export sequence motif. The Nuclear localization signal 3 signature appears at 297-307 (KKSLAKRNWKK). The segment at 298 to 319 (KSLAKRNWKKAYNAAAAIRQLQ) is calmodulin-binding. Polar residues predominate over residues 327–338 (SNRLQKQASQQQ). The interval 327–348 (SNRLQKQASQQQPEPPTPAFHA) is disordered. Pro residues predominate over residues 339–348 (PEPPTPAFHA).

Belongs to the protein kinase superfamily. CAMK Ser/Thr protein kinase family. CaMK subfamily. Interacts with importin ima-3; affinity for ima-3 is increased in the presence of Ca(2+) and calmodulin and leads to increased nuclear accumulation of cmk-1 in FLP neurons upon prolonged heat activation. The cofactor is Mg(2+). Post-translationally, phosphorylation at Thr-179 can promote both nuclear export and import, sustaining nucleocytoplasmic shuttling. In terms of tissue distribution, expressed in head and tail neurons and vulval muscles. Throughout the nervous system. Detected in neurites and neuronal cell bodies. Expressed in the mechanosensory neurons, AVM and ALM, and in the interneurons, AVA, AVB and AVD. Expressed in the right and left ASE neurons where it functions cell-autonomously to control salt-avoidance learning. Expressed in FLP and AFD thermosensory neurons.

It is found in the nucleus. The protein resides in the cytoplasm. It carries out the reaction L-seryl-[protein] + ATP = O-phospho-L-seryl-[protein] + ADP + H(+). It catalyses the reaction L-threonyl-[protein] + ATP = O-phospho-L-threonyl-[protein] + ADP + H(+). Its activity is regulated as follows. Activated by Ca(2+)/calmodulin. Binding of calmodulin results in a conformational change that generates functional binding sites for both substrate and ATP, and thus relieves autoinhibition and lowers the Km of substrate binding. Must be phosphorylated by ckk-1 to be maximally active but this does not appear to be required for activity in AFD neurons. In terms of biological role, calcium/calmodulin-dependent protein kinase that operates in the calcium-triggered CaMKK-CaMK1 signaling cascade which results in transcriptional activation. Transcriptional activation occurs at least in part through phosphorylation of crh-1. Regulates gene expression, sensory morphology, and function of the AFD thermosensory neurons. Involved in long-term adaptation of AFD neurons to temperatures warmer than the initial acclimatized cultivation temperature. Acts in the FLP thermal nociceptors to moderate the responsiveness to noxious heat and controls neuropeptide release from FLP neurons in response to temperature elevations. Regulates the dauer decision, the decision of the larvae to enter into the alternative stress-resistant and long-lived dauer developmental stage, based on the feeding state, primarily in the AWC sensory neurons. Acts non cell-autonomously in the AWC neurons to regulate expression of the daf-28 insulin-like peptide and cell-autonomously in the ASI sensory neurons to regulate expression of the growth promoting daf-7 in a food-regulated manner. Plays a role in memory-based thermal response of an individual AFD neuron cell. Influences habituation and sensitivity to repeated mechanosensory stimuli. Involved in chemotaxis response in AWC neurons to attractant 2-heptanone, a volatile organic compound emitted by the nematode pathogenic bacterium B.nematocida B16. Acts in the ASE salt-sensing neurons to promote a type of aversive gustatory-associated learning called salt-avoidance learning via regulation of crh-1 signaling and the promotion of long-term memory formation, but is not involved in salt attraction. Represses transcription of glutamate receptor glr-1 in the nucleus basally and in response to changes in synaptic activity. In Caenorhabditis elegans, this protein is Calcium/calmodulin-dependent protein kinase type 1.